A 626-amino-acid polypeptide reads, in one-letter code: DEAD-box ATP-dependent RNA helicase 16 (626 aa).

The disordered stretch occupies residues 1 to 48; it reads MGKTKLKPVEDVNSEVVDEVEKAEEVEEQRNDREQEEEQKEEEAPKSF. Positions 9 to 47 form a coiled coil; that stretch reads VEDVNSEVVDEVEKAEEVEEQRNDREQEEEQKEEEAPKS. The segment covering 12–27 has biased composition (acidic residues); sequence VNSEVVDEVEKAEEVE. The Q motif motif lies at 46–74; the sequence is KSFEELGLDSRLIRALTKKGIEKPTLIQQ. The region spanning 77–259 is the Helicase ATP-binding domain; that stretch reads IPYILEGKDV…KLILHNPIVL (183 aa). ATP is bound at residue 90–97; sequence AKTGSGKT. The DEAD box motif lies at 207-210; it reads DEAD. The 185-residue stretch at 293 to 477 folds into the Helicase C-terminal domain; sequence ALLKLEVVQK…PFPLLTENAV (185 aa). Residues 356 to 385 adopt a coiled-coil conformation; that stretch reads IATDDNSQTKKQKEEAKGEANKENKKNNKR. The segment covering 363-381 has biased composition (basic and acidic residues); it reads QTKKQKEEAKGEANKENKK. Disordered stretches follow at residues 363–388 and 568–626; these read QTKK…RSKP and AMGN…QKTV.

It belongs to the DEAD box helicase family. DDX56/DBP9 subfamily.

It carries out the reaction ATP + H2O = ADP + phosphate + H(+). This is DEAD-box ATP-dependent RNA helicase 16 (RH16) from Arabidopsis thaliana (Mouse-ear cress).